A 263-amino-acid chain; its full sequence is Endonuclease 8 (263 aa).

Catalysis depends on Pro2, which acts as the Schiff-base intermediate with DNA. Residue Glu3 is the Proton donor of the active site. Lys53 acts as the Proton donor; for beta-elimination activity in catalysis. Positions 70, 125, and 169 each coordinate DNA. The FPG-type zinc-finger motif lies at 229–263 (KVFHRDGESCERCGGIIERTMLSSRPFYWCPHCQR). Arg253 functions as the Proton donor; for delta-elimination activity in the catalytic mechanism.

This sequence belongs to the FPG family. It depends on Zn(2+) as a cofactor.

It carries out the reaction 2'-deoxyribonucleotide-(2'-deoxyribose 5'-phosphate)-2'-deoxyribonucleotide-DNA = a 3'-end 2'-deoxyribonucleotide-(2,3-dehydro-2,3-deoxyribose 5'-phosphate)-DNA + a 5'-end 5'-phospho-2'-deoxyribonucleoside-DNA + H(+). Involved in base excision repair of DNA damaged by oxidation or by mutagenic agents. Acts as a DNA glycosylase that recognizes and removes damaged bases. Has a preference for oxidized pyrimidines, such as thymine glycol, 5,6-dihydrouracil and 5,6-dihydrothymine. Has AP (apurinic/apyrimidinic) lyase activity and introduces nicks in the DNA strand. Cleaves the DNA backbone by beta-delta elimination to generate a single-strand break at the site of the removed base with both 3'- and 5'-phosphates. In Pectobacterium carotovorum subsp. carotovorum (strain PC1), this protein is Endonuclease 8.